A 368-amino-acid chain; its full sequence is Glutamate 5-kinase (368 aa).

ATP is bound at residue K9. S49, D136, and N148 together coordinate substrate. ATP contacts are provided by residues T168 to D169 and T210 to K216. Positions A275–E353 constitute a PUA domain.

This sequence belongs to the glutamate 5-kinase family.

It is found in the cytoplasm. It catalyses the reaction L-glutamate + ATP = L-glutamyl 5-phosphate + ADP. It functions in the pathway amino-acid biosynthesis; L-proline biosynthesis; L-glutamate 5-semialdehyde from L-glutamate: step 1/2. Its function is as follows. Catalyzes the transfer of a phosphate group to glutamate to form L-glutamate 5-phosphate. The protein is Glutamate 5-kinase of Haemophilus influenzae (strain ATCC 51907 / DSM 11121 / KW20 / Rd).